A 955-amino-acid chain; its full sequence is MADPAECSIKVMCRFRPLNEAEILRGDKFIPKFKGEETVVIGQGKPYVFDRVLPPNTTQEQVYNACAKQIVKDVLEGYNGTIFAYGQTSSGKTHTMEGKLHDPQLMGIIPRIAHDIFDHIYSMDENLEFHIKVSYFEIYLDKIRDLLDVSKTNLAVHEDKNRVPYVKGCTERFVSSPEEVMDVIDEGKANRHVAVTNMNEHSSRSHSIFLINIKQENVETEKKLSGKLYLVDLAGSEKVSKTGAEGAVLDEAKNINKSLSALGNVISALAEGTKTHVPYRDSKMTRILQDSLGGNCRTTIVICCSPSVFNEAETKSTLMFGQRAKTIKNTVSVNLELTAEEWKKKYEKEKEKNKALKSVIQHLEVELNRWRNGEAVPEDEQISAKDQKNLEPCDNTPIIDNITPVVDGISAEKEKYDEEITSLYRQLDDKDDEINQQSQLAEKLKQQMLDQDELLASTRRDYEKIQEELTRLQIENEAAKDEVKEVLQALEELAVNYDQKSQEVEDKTRANEQLTDELAQKTTTLTTTQRELSQLQELSNHQKKRATEILNLLLKDLGEIGGIIGTNDVKTLADVNGVIEEEFTMARLYISKMKSEVKSLVNRSKQLESAQTDSNRKMNASERELAACQLLISQHEAKIKSLTDYMQNMEQKRRQLEESQDSLSEELAKLRAQEKMHEVSFQDKEKEHLTRLQDAEEVKKALEQQMESHREAHQKQLSRLRDEIEEKQRIIDEIRDLNQKLQLEQERLSSDYNKLKIEDQEREVKLEKLLLLNDKREQAREDLKGLEETVSRELQTLHNLRKLFVQDLTTRVKKSVELDSDDGGGSAAQKQKISFLENNLEQLTKVHKQLVRDNADLRCELPKLEKRLRATAERVKALESALKEAKENAMRDRKRYQQEVDRIKEAVRAKNMARRAHSAQIAKPIRPGHYPASSPTAVHAVRGGGGSSNSTHYQK.

Positions 8–327 (SIKVMCRFRP…LMFGQRAKTI (320 aa)) constitute a Kinesin motor domain. ATP contacts are provided by Gln-87, Ser-89, Ser-90, Gly-91, Lys-92, Thr-93, His-94, and Lys-99. The interval 174–315 (VSSPEEVMDV…PSVFNEAETK (142 aa)) is microtubule-binding. Residues 332–366 (SVNLELTAEEWKKKYEKEKEKNKALKSVIQHLEVE) adopt a coiled-coil conformation. Thr-403 carries the post-translational modification Phosphothreonine. Coiled-coil stretches lie at residues 413–538 (KEKY…LQEL) and 590–913 (ISKM…KNMA). The interval 859–955 (CELPKLEKRL…GSSNSTHYQK (97 aa)) is globular. Residues 909-955 (AKNMARRAHSAQIAKPIRPGHYPASSPTAVHAVRGGGGSSNSTHYQK) are disordered.

The protein belongs to the TRAFAC class myosin-kinesin ATPase superfamily. Kinesin family. Kinesin subfamily. In terms of assembly, oligomer composed of two heavy chains and two light chains. Interacts with GRIP1. Interacts with TRAK1. Interacts with ZFYVE27. Interacts with KLC3.

It localises to the cytoplasm. The protein localises to the cytoskeleton. It is found in the cell projection. Its subcellular location is the dendrite. It carries out the reaction ATP + H2O = ADP + phosphate + H(+). Functionally, microtubule-associated force-producing protein that may play a role in organelle transport. Has ATPase activity. Involved in synaptic transmission. Mediates dendritic trafficking of mRNAs. Required for anterograde axonal transportation of MAPK8IP3/JIP3 which is essential for MAPK8IP3/JIP3 function in axon elongation. The sequence is that of Kinesin heavy chain isoform 5C (Kif5c) from Rattus norvegicus (Rat).